A 239-amino-acid polypeptide reads, in one-letter code: Phosphoribosylaminoimidazole-succinocarboxamide synthase (239 aa).

It belongs to the SAICAR synthetase family.

The catalysed reaction is 5-amino-1-(5-phospho-D-ribosyl)imidazole-4-carboxylate + L-aspartate + ATP = (2S)-2-[5-amino-1-(5-phospho-beta-D-ribosyl)imidazole-4-carboxamido]succinate + ADP + phosphate + 2 H(+). It participates in purine metabolism; IMP biosynthesis via de novo pathway; 5-amino-1-(5-phospho-D-ribosyl)imidazole-4-carboxamide from 5-amino-1-(5-phospho-D-ribosyl)imidazole-4-carboxylate: step 1/2. The protein is Phosphoribosylaminoimidazole-succinocarboxamide synthase of Brevibacillus brevis (strain 47 / JCM 6285 / NBRC 100599).